A 285-amino-acid chain; its full sequence is Bifunctional protein FolD (285 aa).

NADP(+) is bound by residues 164–166, Ser189, and Ile230; that span reads GRS.

The protein belongs to the tetrahydrofolate dehydrogenase/cyclohydrolase family. Homodimer.

It catalyses the reaction (6R)-5,10-methylene-5,6,7,8-tetrahydrofolate + NADP(+) = (6R)-5,10-methenyltetrahydrofolate + NADPH. The catalysed reaction is (6R)-5,10-methenyltetrahydrofolate + H2O = (6R)-10-formyltetrahydrofolate + H(+). It participates in one-carbon metabolism; tetrahydrofolate interconversion. Catalyzes the oxidation of 5,10-methylenetetrahydrofolate to 5,10-methenyltetrahydrofolate and then the hydrolysis of 5,10-methenyltetrahydrofolate to 10-formyltetrahydrofolate. In Oceanobacillus iheyensis (strain DSM 14371 / CIP 107618 / JCM 11309 / KCTC 3954 / HTE831), this protein is Bifunctional protein FolD.